The following is a 60-amino-acid chain: Large ribosomal subunit protein bL32 (60 aa).

Basic residues predominate over residues 1-16 (MAVPRNRHSNARKNIR). A disordered region spans residues 1 to 20 (MAVPRNRHSNARKNIRRSHD).

The protein belongs to the bacterial ribosomal protein bL32 family.

This Chlamydia pneumoniae (Chlamydophila pneumoniae) protein is Large ribosomal subunit protein bL32 (rpmF).